A 297-amino-acid polypeptide reads, in one-letter code: UBX domain-containing protein 1 (297 aa).

A2 is modified (N-acetylalanine). The 41-residue stretch at 2-42 (AELTALESLIEMGFPKGRAEKALALTGNQGIEAAMDWLMEH) folds into the UBA domain. The disordered stretch occupies residues 40–210 (MEHEDDPDVD…PSREPPTKRE (171 aa)). An interaction with BRCA1 region spans residues 43–297 (EDDPDVDEPL…VLIVAKKCPG (255 aa)). Basic and acidic residues-rich tracts occupy residues 86-122 (LTEEERQEQTKRMLELVAQKQREREEREEREALERER) and 137-177 (RLQE…ERAK). Residues 86 to 176 (LTEEERQEQT…KIERDKAERA (91 aa)) adopt a coiled-coil conformation. A compositionally biased stretch (pro residues) spans 187–199 (PSPPATEPGPVPS). S199 bears the Phosphoserine mark. S200 carries the phosphoserine; by MAPK12 modification. Phosphothreonine is present on residues T207 and T229. The UBX domain occupies 209-291 (REYDQCRIQV…GLVPSAVLIV (83 aa)). The residue at position 270 (S270) is a Phosphoserine.

In terms of assembly, component of a complex required to couple retrotranslocation, ubiquitination and deglycosylation composed of NGLY1, SAKS1, AMFR, VCP and RAD23B. Interacts with HOMER2. Interacts directly with VCP. Interacts with BRCA1 and BARD1; interaction takes place when BRCA1 is not autoubiquitinated bur is strongly enhanced in the presence of autoubiquitinated BRCA1.

The protein localises to the cytoplasm. In terms of biological role, ubiquitin-binding protein that interacts with the BRCA1-BARD1 heterodimer, and regulates its activity. Specifically binds 'Lys-6'-linked polyubiquitin chains. Interaction with autoubiquitinated BRCA1, leads to inhibit the E3 ubiquitin-protein ligase activity of the BRCA1-BARD1 heterodimer. Component of a complex required to couple deglycosylation and proteasome-mediated degradation of misfolded proteins in the endoplasmic reticulum that are retrotranslocated in the cytosol. The protein is UBX domain-containing protein 1 (UBXN1) of Bos taurus (Bovine).